A 381-amino-acid polypeptide reads, in one-letter code: CCN family member 1 (381 aa).

The signal sequence occupies residues 1–24; it reads MSSRIARALALVVTLLHLTRLALS. An IGFBP N-terminal domain is found at 25 to 94; the sequence is TCPAACHCPL…TALKGICRAQ (70 aa). 6 disulfide bridges follow: C26–C50, C30–C52, C32–C53, C39–C56, C64–C78, and C70–C91. Residues 98–164 enclose the VWFC domain; sequence RPCEYNSRIY…GQCCEEWVCD (67 aa). S188 carries the phosphoserine modification. A TSP type-1 domain is found at 228–273; the sequence is KCIVQTTSWSQCSKTCGTGISTRVTNDNPECRLVKETRICEVRPCG. The heparin-binding stretch occupies residues 279-315; the sequence is SLKKGKKCSKTKKSPEPVRFTYAGCLSVKKYRPKYCG. Intrachain disulfides connect C286–C323, C303–C337, C314–C353, C317–C355, and C322–C359. Residues 286 to 360 enclose the CTCK domain; sequence CSKTKKSPEP…QSCKCNYNCP (75 aa).

It belongs to the CCN family. In terms of assembly, interaction with integrins is heparin- and cell-type-dependent and promotes cell adhesion.

Its subcellular location is the secreted. In terms of biological role, promotes cell proliferation, chemotaxis, angiogenesis and cell adhesion. Appears to play a role in wound healing by up-regulating, in skin fibroblasts, the expression of a number of genes involved in angiogenesis, inflammation and matrix remodeling including VEGA-A, VEGA-C, MMP1, MMP3, TIMP1, uPA, PAI-1 and integrins alpha-3 and alpha-5. CCN1-mediated gene regulation is dependent on heparin-binding. Down-regulates the expression of alpha-1 and alpha-2 subunits of collagen type-1. Promotes cell adhesion and adhesive signaling through integrin alpha-6/beta-1, cell migration through integrin alpha-1/beta-5 and cell proliferation through integrin alpha-v/beta-3. This chain is CCN family member 1 (CCN1), found in Pan troglodytes (Chimpanzee).